Here is a 144-residue protein sequence, read N- to C-terminus: Large ribosomal subunit protein uL15 (144 aa).

The disordered stretch occupies residues 1–58 (MKLNTLSPAAGAKHAAKRVGRGIGSGLGKTAGRGHKGQKSRSGGSIRPGFEGGQMPLK). Positions 21-31 (RGIGSGLGKTA) are enriched in gly residues.

This sequence belongs to the universal ribosomal protein uL15 family. In terms of assembly, part of the 50S ribosomal subunit.

Binds to the 23S rRNA. The polypeptide is Large ribosomal subunit protein uL15 (Psychromonas ingrahamii (strain DSM 17664 / CCUG 51855 / 37)).